The primary structure comprises 122 residues: uncharacterized protein (122 aa).

The protein resides in the plastid. This is an uncharacterized protein from Euglena longa (Euglenophycean alga).